We begin with the raw amino-acid sequence, 180 residues long: Ribulose bisphosphate carboxylase small subunit, chloroplastic 2 (180 aa).

The transit peptide at 1–56 directs the protein to the chloroplast; sequence MASSVISSAAVATRSNVTQASMVAPFTGLKSSATFPVTKKQNLDITSIASNGGRVS.

It belongs to the RuBisCO small chain family. In terms of assembly, heterohexadecamer of 8 large and 8 small subunits. As to quaternary structure, (Microbial infection) Binds to tobamovirus movement protein; this interaction seems required for viral systemic movement.

The protein resides in the plastid. It is found in the chloroplast. The protein localises to the cell junction. Its subcellular location is the plasmodesma. Its function is as follows. RuBisCO catalyzes two reactions: the carboxylation of D-ribulose 1,5-bisphosphate, the primary event in carbon dioxide fixation, as well as the oxidative fragmentation of the pentose substrate. Both reactions occur simultaneously and in competition at the same active site. Although the small subunit is not catalytic it is essential for maximal activity. Involved in antiviral defenses. The sequence is that of Ribulose bisphosphate carboxylase small subunit, chloroplastic 2 from Solanum lycopersicum (Tomato).